Consider the following 147-residue polypeptide: Protein phosphatase 1 regulatory subunit 14B (147 aa).

Positions 1-15 are enriched in low complexity; it reads MADSGPAGGAALAAP. The tract at residues 1–55 is disordered; sequence MADSGPAGGAALAAPAPGPGSGGAGPRVYFQSPPGAAGEGPGGADDEGPVRRQGK. Residue alanine 2 is modified to N-acetylalanine. The residue at position 21 (serine 21) is a Phosphoserine. Tyrosine 29 bears the Phosphotyrosine mark. Serine 32 carries the phosphoserine modification. Residue threonine 57 is modified to Phosphothreonine. A coiled-coil region spans residues 61 to 103; the sequence is DRKELRKRLNLEEWILEQLTRLYDCQEEEIPELEIDVDELLDM.

This sequence belongs to the PP1 inhibitor family. In terms of processing, phosphorylated primarily on Thr-57 by PKC (in vitro). An unknown Ser is also phosphorylated by PKC (in vitro).

It is found in the cytoplasm. Functionally, inhibitor of PPP1CA. Has over 50-fold higher inhibitory activity when phosphorylated. The polypeptide is Protein phosphatase 1 regulatory subunit 14B (PPP1R14B) (Sus scrofa (Pig)).